A 212-amino-acid chain; its full sequence is Ribonuclease HII (212 aa).

One can recognise an RNase H type-2 domain in the interval 17–206; sequence RVIAGVDEAG…KSTKPQSLQT (190 aa). Residues D23, E24, and D115 each coordinate a divalent metal cation.

Belongs to the RNase HII family. Mn(2+) serves as cofactor. Requires Mg(2+) as cofactor.

The protein localises to the cytoplasm. The enzyme catalyses Endonucleolytic cleavage to 5'-phosphomonoester.. Its function is as follows. Endonuclease that specifically degrades the RNA of RNA-DNA hybrids. The sequence is that of Ribonuclease HII from Syntrophus aciditrophicus (strain SB).